A 272-amino-acid polypeptide reads, in one-letter code: Type II secretion system protein C (272 aa).

Over 1 to 16 (MNISKLPPLSPSVIRR) the chain is Cytoplasmic. The chain crosses the membrane as a helical span at residues 17 to 35 (ILFYLLMLLFCQQLAMIFW). The Periplasmic portion of the chain corresponds to 36–272 (RVGLPDNSPV…DIYMEFGGDE (237 aa)).

It belongs to the GSP C family.

The protein resides in the cell inner membrane. In terms of biological role, involved in a type II secretion system (T2SS, formerly general secretion pathway, GSP) for the export of proteins. Required for the translocation of the multiple pectic enzymes. In Dickeya chrysanthemi (Pectobacterium chrysanthemi), this protein is Type II secretion system protein C (outC).